The primary structure comprises 199 residues: 7-methyl-GTP pyrophosphatase (199 aa).

The Proton acceptor role is filled by Asp73.

This sequence belongs to the Maf family. YceF subfamily. It depends on a divalent metal cation as a cofactor.

It localises to the cytoplasm. The catalysed reaction is N(7)-methyl-GTP + H2O = N(7)-methyl-GMP + diphosphate + H(+). Functionally, nucleoside triphosphate pyrophosphatase that hydrolyzes 7-methyl-GTP (m(7)GTP). May have a dual role in cell division arrest and in preventing the incorporation of modified nucleotides into cellular nucleic acids. The sequence is that of 7-methyl-GTP pyrophosphatase from Bordetella bronchiseptica (strain ATCC BAA-588 / NCTC 13252 / RB50) (Alcaligenes bronchisepticus).